Reading from the N-terminus, the 156-residue chain is ATP synthase subunit b (156 aa).

A helical membrane pass occupies residues 5 to 27 (ITLIGQMITFAIFIGFTMKFVWP).

It belongs to the ATPase B chain family. As to quaternary structure, F-type ATPases have 2 components, F(1) - the catalytic core - and F(0) - the membrane proton channel. F(1) has five subunits: alpha(3), beta(3), gamma(1), delta(1), epsilon(1). F(0) has three main subunits: a(1), b(2) and c(10-14). The alpha and beta chains form an alternating ring which encloses part of the gamma chain. F(1) is attached to F(0) by a central stalk formed by the gamma and epsilon chains, while a peripheral stalk is formed by the delta and b chains.

The protein resides in the cell inner membrane. Its function is as follows. F(1)F(0) ATP synthase produces ATP from ADP in the presence of a proton or sodium gradient. F-type ATPases consist of two structural domains, F(1) containing the extramembraneous catalytic core and F(0) containing the membrane proton channel, linked together by a central stalk and a peripheral stalk. During catalysis, ATP synthesis in the catalytic domain of F(1) is coupled via a rotary mechanism of the central stalk subunits to proton translocation. Component of the F(0) channel, it forms part of the peripheral stalk, linking F(1) to F(0). The chain is ATP synthase subunit b from Francisella tularensis subsp. holarctica (strain OSU18).